We begin with the raw amino-acid sequence, 546 residues long: Probable protein kinase UbiB (546 aa).

Residues 124–502 form the Protein kinase domain; it reads DFEIKPLASA…HVRQGQSRYF (379 aa). ATP is bound by residues 130–138 and lysine 153; that span reads LASASIAQV. The active-site Proton acceptor is the aspartate 288. The next 2 helical transmembrane spans lie at 501–521 and 522–542; these read YFLG…VSRP and EWGL…FVGW.

Belongs to the ABC1 family. UbiB subfamily.

Its subcellular location is the cell inner membrane. The protein operates within cofactor biosynthesis; ubiquinone biosynthesis [regulation]. Functionally, is probably a protein kinase regulator of UbiI activity which is involved in aerobic coenzyme Q (ubiquinone) biosynthesis. This Shigella sonnei (strain Ss046) protein is Probable protein kinase UbiB.